The primary structure comprises 340 residues: N-acetyl-gamma-glutamyl-phosphate reductase (340 aa).

Cys146 is a catalytic residue.

The protein belongs to the NAGSA dehydrogenase family. Type 1 subfamily.

The protein localises to the cytoplasm. The enzyme catalyses N-acetyl-L-glutamate 5-semialdehyde + phosphate + NADP(+) = N-acetyl-L-glutamyl 5-phosphate + NADPH + H(+). Its pathway is amino-acid biosynthesis; L-arginine biosynthesis; N(2)-acetyl-L-ornithine from L-glutamate: step 3/4. Its function is as follows. Catalyzes the NADPH-dependent reduction of N-acetyl-5-glutamyl phosphate to yield N-acetyl-L-glutamate 5-semialdehyde. The sequence is that of N-acetyl-gamma-glutamyl-phosphate reductase from Streptococcus sanguinis (strain SK36).